The chain runs to 318 residues: MFMINVLLLIIPILLAVAFLTLVERKILGYMQLRKGPNIVGPYGLLQPIADALKLFIKEPLQPLTSSTSMFIIAPILALTLALTMWIPLPMPYPLINMNLGILFMLAMSSLAVYSILWSGWASNSKYALIGALRAVAQTISYEVTLAIILLSVLLMSGSFTLSTLIITQEYLWLIFPSWPLAMMWFISTLAETNRAPFDLTEGESELVSGFNVEYAAGPFALFFLAEYANIIMMNIFTTTLFLGAFHSPYLPELYSINFTMKTLLLTCSFLWIRASYPRFRYDQLMHLLWKNFLPLTLALCMWHVSLPIMLSSIPPQT.

8 helical membrane-spanning segments follow: residues 2 to 22 (FMIN…FLTL), 70 to 90 (MFII…IPLP), 100 to 120 (LGIL…LWSG), 147 to 167 (AIIL…TLII), 171 to 191 (YLWL…STLA), 217 to 237 (AGPF…MNIF), 254 to 276 (LYSI…IRAS), and 294 to 314 (LPLT…LSSI).

Belongs to the complex I subunit 1 family. In terms of assembly, core subunit of respiratory chain NADH dehydrogenase (Complex I) which is composed of 45 different subunits.

The protein localises to the mitochondrion inner membrane. It carries out the reaction a ubiquinone + NADH + 5 H(+)(in) = a ubiquinol + NAD(+) + 4 H(+)(out). In terms of biological role, core subunit of the mitochondrial membrane respiratory chain NADH dehydrogenase (Complex I) which catalyzes electron transfer from NADH through the respiratory chain, using ubiquinone as an electron acceptor. Essential for the catalytic activity and assembly of complex I. This is NADH-ubiquinone oxidoreductase chain 1 (MT-ND1) from Equus asinus (Donkey).